The chain runs to 145 residues: Large ribosomal subunit protein uL16 (145 aa).

Belongs to the universal ribosomal protein uL16 family. As to quaternary structure, part of the 50S ribosomal subunit.

Binds 23S rRNA and is also seen to make contacts with the A and possibly P site tRNAs. This is Large ribosomal subunit protein uL16 from Desulfitobacterium hafniense (strain DSM 10664 / DCB-2).